We begin with the raw amino-acid sequence, 952 residues long: MDYQLHEGKQISQEFPTDISTTKSSDLKSRKTDSPSIQRTHEFVNFSVFPIVNTNEIMNVDIKHFSPDLKCPTSPNIFLQPLTTTPNTTPNTSTTIDSNTEINPIEIQLQSPLLFQPEHLSPQTLKTTIPTFSIPTYPTPLNTKFQSSPPPPPPPPAATTTTTITTTTTTSAGNSTTKNNNNNNNNNNNNNGKSPKQFQDVLIPVTSSGKDGALYTVLENVPIKRTHRRRSANIDKDSLKCYQCNTSNTPEWRKGPEGPATLCNACGLAYAKKQKLTKNNIKFNQSTNVNNNTNNTITQLNQQINNQGLPNLTSTTTTSNNTAAAVNITTPSKRNNKYNTHRSKVFGEVAPSIVYTNGTLNNVGTPVSDTKKSHTFHEYMTPSNSFFTGKPIKTTKTKPKPKSKSKPGKITHTKHEQPQLNEQVQAIMEKNNLLSSSGGSGGAGSSSSSCGTSLNSSLGSSSGTITNSGGGSSGGGGGNLFSNQQLGFTCINNNVSNNNSNNNINNNDKQIQQQIQQVQQQVHQQVQQQLQQQQQVQQQQQQINQEPFLNQQNHYYQNIFQNVSTGNQNCAINTNGGFPQFESPMDIFPYNNNTTNCTQDSNGFVPNLANFEMQGNVLYNSSGSPSSLGQYVIQNNSFSGPNDQNPYVPSVSLNSNKTTNIKNNNNNKKNSKNKNNKNNKNNNNNTKINNHHINNNKNNVNTNQTIIKENNSQKQHQQQQQQQQQQQEQQKQQQEQQKQQEEQQQNLSINNSNQTNENEILGTTTTTTTSTATIITSQVPMNLSPNSDDNQSSSNYSTLSDSGSSPTDSFSGLSVNTPHPNCDSFSSSINNGSNCGSDIETIESPLQMSTDVLTINNCSSNRTTATNNNINNNNNNNNNNNNNNNKCSIKDDTFNLLTNSNLDSFGIIDCINGSSTNTNSFFMETPLLINDEDLLSSSNLTSSSELLPHSFV.

Disordered regions lie at residues 1–36 (MDYQ…DSPS) and 138–197 (PTPL…SPKQ). Residues 10–24 (QISQEFPTDISTTKS) are compositionally biased toward polar residues. Positions 148-157 (SPPPPPPPPA) are enriched in pro residues. The segment covering 158 to 196 (ATTTTTITTTTTTSAGNSTTKNNNNNNNNNNNNNGKSPK) has biased composition (low complexity). Residues 241–266 (CYQCNTSNTPEWRKGPEGPATLCNAC) form a GATA-type zinc finger. Disordered stretches follow at residues 380 to 418 (MTPS…HEQP), 433 to 478 (LLSS…GGGG), 634 to 699 (QNNS…NKNN), and 732 to 816 (QQQE…LSVN). Positions 393–412 (KTTKTKPKPKSKSKPGKITH) are enriched in basic residues. Residues 445-467 (SSSSSCGTSLNSSLGSSSGTITN) are compositionally biased toward low complexity. The segment covering 468-478 (SGGGSSGGGGG) has biased composition (gly residues). A compositionally biased stretch (polar residues) spans 634–653 (QNNSFSGPNDQNPYVPSVSL). Composition is skewed to low complexity over residues 654–668 (NSNK…NNNK), 678–699 (NNKN…NKNN), and 732–745 (QQQE…EQQQ). Polar residues predominate over residues 746–762 (NLSINNSNQTNENEILG). Positions 763 to 814 (TTTTTTTSTATIITSQVPMNLSPNSDDNQSSSNYSTLSDSGSSPTDSFSGLS) are enriched in low complexity.

This Dictyostelium discoideum (Social amoeba) protein is GATA zinc finger domain-containing protein 5 (gtaE).